Consider the following 171-residue polypeptide: Protein BTG1 (171 aa).

The residue at position 159 (Ser159) is a Phosphoserine.

The protein belongs to the BTG family. As to quaternary structure, interacts with CNOT7 and CNOT8.

In terms of biological role, anti-proliferative protein. This chain is Protein BTG1 (Btg1), found in Rattus norvegicus (Rat).